The following is a 77-amino-acid chain: Large ribosomal subunit protein eL20 (77 aa).

This sequence belongs to the eukaryotic ribosomal protein eL20 family. In terms of assembly, part of the 50S ribosomal subunit. Binds 23S rRNA.

This chain is Large ribosomal subunit protein eL20, found in Pyrococcus abyssi (strain GE5 / Orsay).